Reading from the N-terminus, the 416-residue chain is MTSTLPSQPSASDLAVSSRPAAAGRFGRYGGQYVPETLMPALAELEQAAAQAWKDPAFTAELNRLLKSYVGRATPLYEAERLTEHYRRADGGPRIWLKREDLNHTGAHKINNALGQALLALRMGKKRVIAETGAGQHGVATATVCARFGLECVVYMGAEDMRRQALNVFRMRLLGATVHPVTAGTATLKDATSEAIRDWVTNVETTHYILGSVAGPHPYPMLVRDFHAVIGQETRQQCREAFGRLPDVLMACVGGGSNAMGLFHPFVECTDVRLIGVEAAGDGVATGRHAATITEGRVGVLHGAMSLLLQDQDGQVQEAHSISAGLDYPGVGPEHSYLREIGRAEYGAVTDAEALEALQLVSRLEGIIPALETAHAFAWLETLCPTLSAGTEVVLNCSGRGDKDVNTVAERLGDAL.

Position 109 is an N6-(pyridoxal phosphate)lysine (Lys109).

It belongs to the TrpB family. Tetramer of two alpha and two beta chains. The cofactor is pyridoxal 5'-phosphate.

It catalyses the reaction (1S,2R)-1-C-(indol-3-yl)glycerol 3-phosphate + L-serine = D-glyceraldehyde 3-phosphate + L-tryptophan + H2O. Its pathway is amino-acid biosynthesis; L-tryptophan biosynthesis; L-tryptophan from chorismate: step 5/5. Its function is as follows. The beta subunit is responsible for the synthesis of L-tryptophan from indole and L-serine. This chain is Tryptophan synthase beta chain, found in Synechococcus sp. (strain WH7803).